We begin with the raw amino-acid sequence, 358 residues long: 3-isopropylmalate dehydrogenase (358 aa).

77–90 lines the NAD(+) pocket; it reads GPKWDNLPIDQRPE. Residues R98, R108, R137, and D221 each coordinate substrate. Positions 221, 245, and 249 each coordinate Mg(2+). 279–291 contacts NAD(+); that stretch reads GSAPDIAHLNIAN.

Belongs to the isocitrate and isopropylmalate dehydrogenases family. LeuB type 1 subfamily. As to quaternary structure, homodimer. Mg(2+) is required as a cofactor. Requires Mn(2+) as cofactor.

The protein resides in the cytoplasm. It carries out the reaction (2R,3S)-3-isopropylmalate + NAD(+) = 4-methyl-2-oxopentanoate + CO2 + NADH. It functions in the pathway amino-acid biosynthesis; L-leucine biosynthesis; L-leucine from 3-methyl-2-oxobutanoate: step 3/4. Functionally, catalyzes the oxidation of 3-carboxy-2-hydroxy-4-methylpentanoate (3-isopropylmalate) to 3-carboxy-4-methyl-2-oxopentanoate. The product decarboxylates to 4-methyl-2 oxopentanoate. This is 3-isopropylmalate dehydrogenase from Campylobacter jejuni (strain RM1221).